The chain runs to 315 residues: ADP-L-glycero-D-manno-heptose-6-epimerase (315 aa).

NADP(+)-binding positions include 10–11, 31–32, Lys38, Lys53, 76–80, and Asn93; these read FI, DD, and QGACS. Residue Tyr140 is the Proton acceptor of the active site. Lys144 is an NADP(+) binding site. A substrate-binding site is contributed by Asn169. NADP(+) contacts are provided by Val170 and Lys178. Lys178 functions as the Proton acceptor in the catalytic mechanism. Substrate-binding positions include Ser180, His187, 201 to 204, Arg214, and Tyr278; that span reads FEGC.

Belongs to the NAD(P)-dependent epimerase/dehydratase family. HldD subfamily. Homopentamer. NADP(+) is required as a cofactor.

The catalysed reaction is ADP-D-glycero-beta-D-manno-heptose = ADP-L-glycero-beta-D-manno-heptose. The protein operates within nucleotide-sugar biosynthesis; ADP-L-glycero-beta-D-manno-heptose biosynthesis; ADP-L-glycero-beta-D-manno-heptose from D-glycero-beta-D-manno-heptose 7-phosphate: step 4/4. Catalyzes the interconversion between ADP-D-glycero-beta-D-manno-heptose and ADP-L-glycero-beta-D-manno-heptose via an epimerization at carbon 6 of the heptose. This is ADP-L-glycero-D-manno-heptose-6-epimerase from Syntrophotalea carbinolica (strain DSM 2380 / NBRC 103641 / GraBd1) (Pelobacter carbinolicus).